The chain runs to 297 residues: MRTDNDQWDITISVGQTALFVAASRALEARKPHPLAVDHYAEVFCRAAGGDWVAAVEGTDPEHPLQTEFGVDFVNFQGARTKYFDDYFRRVADAGVRQVVLLAAGLDSRAYRLPWADGTVVYELDVPKVLEFKREVLRRHGATPTAERREVPVDLRDDWPAALRANGFDASQPSAWIAEGLLIYLPADAQELLFAGIDALSAPGSFVAIEESAPMPMDVFEVKRAEALASGDPNSFFALVFNEQCAPGEQWFSERGWTASTTTLNECLHEVGRPAPAPDSEAAQMTGSISLMWARKG.

S-adenosyl-L-methionine-binding positions include aspartate 125 and 154-155 (DL).

This sequence belongs to the UPF0677 family.

Functionally, exhibits S-adenosyl-L-methionine-dependent methyltransferase activity. This chain is Putative S-adenosyl-L-methionine-dependent methyltransferase MSMEG_0614/MSMEI_0598, found in Mycolicibacterium smegmatis (strain ATCC 700084 / mc(2)155) (Mycobacterium smegmatis).